A 297-amino-acid polypeptide reads, in one-letter code: Carbamate kinase (297 aa).

This sequence belongs to the carbamate kinase family.

It localises to the cytoplasm. The enzyme catalyses hydrogencarbonate + NH4(+) + ATP = carbamoyl phosphate + ADP + H2O + H(+). It carries out the reaction carbamate + ATP = carbamoyl phosphate + ADP. The catalysed reaction is hydrogencarbonate + NH4(+) = carbamate + H2O + H(+). The protein operates within nitrogen metabolism; (S)-allantoin degradation. In terms of biological role, kinase involved in the anaerobic nitrogen utilization via the assimilation of allantoin. Catalyzes the transfer of a phosphate group from carbamoyl phosphate to ADP to produce ATP and leave carbamate, which spontaneously hydrolyzes to ammonia and hydrogencarbonate. The polypeptide is Carbamate kinase (Escherichia coli O157:H7).